The following is a 138-amino-acid chain: UPF0310 protein MAV_1800 (138 aa).

This sequence belongs to the UPF0310 family.

This is UPF0310 protein MAV_1800 from Mycobacterium avium (strain 104).